A 751-amino-acid polypeptide reads, in one-letter code: Photosystem I P700 chlorophyll a apoprotein A1 (751 aa).

Transmembrane regions (helical) follow at residues 73-96, 159-182, 198-222, 294-312, 349-372, 388-414, 436-458, and 533-551; these read VFSA…FHGA, LYAT…FHYH, MNHH…HISL, EAHH…GHQY, WHAQ…HHMY, LSLF…IFMV, AIIS…LYIH, and FLVH…LILL. Residues C575 and C584 each contribute to the [4Fe-4S] cluster site. Transmembrane regions (helical) follow at residues 591-612 and 665-687; these read HVFL…HFSW and LSAY…MFLF. Position 676 (H676) interacts with chlorophyll a'. Residues M684 and Y692 each coordinate chlorophyll a. W693 contacts phylloquinone. A helical membrane pass occupies residues 725–745; the sequence is AVGVAHYLLGGIATTWSFFLA.

Belongs to the PsaA/PsaB family. As to quaternary structure, the PsaA/B heterodimer binds the P700 chlorophyll special pair and subsequent electron acceptors. PSI consists of a core antenna complex that captures photons, and an electron transfer chain that converts photonic excitation into a charge separation. The eukaryotic PSI reaction center is composed of at least 11 subunits. It depends on P700 is a chlorophyll a/chlorophyll a' dimer, A0 is one or more chlorophyll a, A1 is one or both phylloquinones and FX is a shared 4Fe-4S iron-sulfur center. as a cofactor.

Its subcellular location is the plastid. The protein resides in the chloroplast thylakoid membrane. It carries out the reaction reduced [plastocyanin] + hnu + oxidized [2Fe-2S]-[ferredoxin] = oxidized [plastocyanin] + reduced [2Fe-2S]-[ferredoxin]. In terms of biological role, psaA and PsaB bind P700, the primary electron donor of photosystem I (PSI), as well as the electron acceptors A0, A1 and FX. PSI is a plastocyanin/cytochrome c6-ferredoxin oxidoreductase, converting photonic excitation into a charge separation, which transfers an electron from the donor P700 chlorophyll pair to the spectroscopically characterized acceptors A0, A1, FX, FA and FB in turn. Oxidized P700 is reduced on the lumenal side of the thylakoid membrane by plastocyanin or cytochrome c6. This is Photosystem I P700 chlorophyll a apoprotein A1 from Oltmannsiellopsis viridis (Marine flagellate).